A 388-amino-acid chain; its full sequence is Succinate--CoA ligase [ADP-forming] subunit beta (388 aa).

One can recognise an ATP-grasp domain in the interval 9 to 244 (KQLFAEYGLP…PSQDDPREAH (236 aa)). ATP contacts are provided by residues Lys-46, 53 to 55 (GRG), Glu-99, Thr-102, and Glu-107. Mg(2+)-binding residues include Asn-199 and Asp-213. Substrate-binding positions include Asn-264 and 321-323 (GIV).

It belongs to the succinate/malate CoA ligase beta subunit family. As to quaternary structure, heterotetramer of two alpha and two beta subunits. Requires Mg(2+) as cofactor.

The enzyme catalyses succinate + ATP + CoA = succinyl-CoA + ADP + phosphate. It catalyses the reaction GTP + succinate + CoA = succinyl-CoA + GDP + phosphate. The protein operates within carbohydrate metabolism; tricarboxylic acid cycle; succinate from succinyl-CoA (ligase route): step 1/1. Functionally, succinyl-CoA synthetase functions in the citric acid cycle (TCA), coupling the hydrolysis of succinyl-CoA to the synthesis of either ATP or GTP and thus represents the only step of substrate-level phosphorylation in the TCA. The beta subunit provides nucleotide specificity of the enzyme and binds the substrate succinate, while the binding sites for coenzyme A and phosphate are found in the alpha subunit. This chain is Succinate--CoA ligase [ADP-forming] subunit beta, found in Aeromonas hydrophila subsp. hydrophila (strain ATCC 7966 / DSM 30187 / BCRC 13018 / CCUG 14551 / JCM 1027 / KCTC 2358 / NCIMB 9240 / NCTC 8049).